Consider the following 425-residue polypeptide: Serine--tRNA ligase (425 aa).

230–232 is an L-serine binding site; the sequence is TAE. 261–263 is a binding site for ATP; sequence RSE. E284 lines the L-serine pocket. 348–351 serves as a coordination point for ATP; it reads EISS. Position 384 (S384) interacts with L-serine.

The protein belongs to the class-II aminoacyl-tRNA synthetase family. Type-1 seryl-tRNA synthetase subfamily. In terms of assembly, homodimer. The tRNA molecule binds across the dimer.

It localises to the cytoplasm. The catalysed reaction is tRNA(Ser) + L-serine + ATP = L-seryl-tRNA(Ser) + AMP + diphosphate + H(+). It catalyses the reaction tRNA(Sec) + L-serine + ATP = L-seryl-tRNA(Sec) + AMP + diphosphate + H(+). It participates in aminoacyl-tRNA biosynthesis; selenocysteinyl-tRNA(Sec) biosynthesis; L-seryl-tRNA(Sec) from L-serine and tRNA(Sec): step 1/1. Its function is as follows. Catalyzes the attachment of serine to tRNA(Ser). Is also able to aminoacylate tRNA(Sec) with serine, to form the misacylated tRNA L-seryl-tRNA(Sec), which will be further converted into selenocysteinyl-tRNA(Sec). In Maridesulfovibrio salexigens (strain ATCC 14822 / DSM 2638 / NCIMB 8403 / VKM B-1763) (Desulfovibrio salexigens), this protein is Serine--tRNA ligase.